The chain runs to 299 residues: 4-hydroxy-tetrahydrodipicolinate synthase 2 (299 aa).

Position 54 (Thr-54) interacts with pyruvate. Tyr-142 (proton donor/acceptor) is an active-site residue. Lys-170 (schiff-base intermediate with substrate) is an active-site residue. Val-210 provides a ligand contact to pyruvate.

This sequence belongs to the DapA family. Homotetramer; dimer of dimers.

It is found in the cytoplasm. It carries out the reaction L-aspartate 4-semialdehyde + pyruvate = (2S,4S)-4-hydroxy-2,3,4,5-tetrahydrodipicolinate + H2O + H(+). The protein operates within amino-acid biosynthesis; L-lysine biosynthesis via DAP pathway; (S)-tetrahydrodipicolinate from L-aspartate: step 3/4. Functionally, catalyzes the condensation of (S)-aspartate-beta-semialdehyde [(S)-ASA] and pyruvate to 4-hydroxy-tetrahydrodipicolinate (HTPA). This is 4-hydroxy-tetrahydrodipicolinate synthase 2 from Streptomyces coelicolor (strain ATCC BAA-471 / A3(2) / M145).